Consider the following 2507-residue polypeptide: Highly reducing polyketide synthase lcsB (2507 aa).

The 392-residue stretch at 2–393 (AEPIAVVGMA…GVNAHVIVES (392 aa)) folds into the Ketosynthase family 3 (KS3) domain. A disordered region spans residues 399–501 (NHDRGLSNGS…RNGYSGDDVE (103 aa)). Polar residues-rich tracts occupy residues 405–414 (SNGSTTSSSP) and 470–488 (NDTP…TSHT). Residues 581 to 900 (WVFTGQGAQW…DESLLQLAGK (320 aa)) form a malonyl-CoA:ACP transacylase (MAT) domain region. Residues 953 to 1080 (HELLGSRVTE…GEARASVDKA (128 aa)) are N-terminal hotdog fold. Residues 953–1232 (HELLGSRVTE…FKASALTRSD (280 aa)) are dehydratase (DH) domain. A PKS/mFAS DH domain is found at 953–1234 (HELLGSRVTE…ASALTRSDDE (282 aa)). Histidine 984 functions as the Proton acceptor; for dehydratase activity in the catalytic mechanism. Residues 1092–1234 (ARTVDANEWY…ASALTRSDDE (143 aa)) are C-terminal hotdog fold. The active-site Proton donor; for dehydratase activity is aspartate 1151. The tract at residues 1402 to 1570 (LGHTNPRLRI…EMVAAGFAEP (169 aa)) is methyltransferase (CMet) domain. An enoyl reductase (ER) (ER) domain region spans residues 1793-2105 (GLLHTMGWSQ…GGRHIGKIIV (313 aa)). Positions 2130-2303 (SYLLVGGLGG…ASVIDIGVMG (174 aa)) are ketoreductase (KR) domain. In terms of domain architecture, Carrier spans 2425–2503 (EESTVIIATA…SLGDYIRTAL (79 aa)). Serine 2463 carries the O-(pantetheine 4'-phosphoryl)serine modification.

It participates in secondary metabolite biosynthesis. Its function is as follows. Highly reducing polyketide synthase; part of the gene cluster that mediates the biosynthesis of the lipopeptide antibiotics leucinostatins that show extensive biological activities, including antimalarial, antiviral, antibacterial, antifungal, and antitumor activities, as well as phytotoxic. Leucinostatin A contains nine amino acid residues, including the unusual amino acid 4-methyl-L-proline (MePro), 2-amino-6-hydroxy-4-methyl-8-oxodecanoic acid (AHyMeOA), 3-hydroxyleucine (HyLeu), alpha-aminoisobutyric acid (AIB), beta-Ala, a 4-methylhex-2-enoic acid at the N-terminus as well as a N1,N1-dimethylpropane-1,2-diamine (DPD) at the C-terminus. The biosynthesis of leucinostatins is probably initiated with the assembly of 4-methylhex-2-enoic acid by a reducing PKS. Two reducing polyketide synthases, lcsB and lcsC, have been identified in the cluster and it is not clear which is the one that assembles 4-methylhex-2-enoic acid since both contain KS, AT, DH, cMT, ER, KR and ACP domains. The polyketide residue might be transferred to the NRPS lcsA, mediated by two additional enzymes, the acyl-CoA ligase lcsD and the thioesterase lcsE. The linear polyketide carboxylic acid, which is released from PKS, is converted to a CoA thioester by lcsD, and then lcsE hydrolyzes the thiol bond and shuttles the polyketide intermediate to lcsA. The C domain of the first module catalyzed the condensation of 4-methylhex-2-enoic acid and MePro carried by domain A1, followed by successive condensations of nine amino acids to trigger the elongation of the linear peptide. A5 and A6 domains of lcsA are proposed to incorporate leucine, A2 AHyMeOA, and A3 incorporates HyLeu. A4, A7 and A8 incorporate AIB. The AHyMeOA in leucinostatin A activated by the A2 might be produced by the second PKS (lcsB or lcsC) present within the cluster. The MePro is probably produced via leucine cyclization and may originate from a separate pathway, independent of the cluster. Another nonproteinogenic amino acid, beta-Ala, could be produced by an aspartic acid decarboxylase also localized outside of the cluster. Two candidates are VFPBJ_01400 and VFPBJ_10476. The final peptide scaffold may be released by the NAD(P)H-dependent thioester reductase (TE) at the C-terminal region of lcsA. Transamination of the lcsA product by the transaminase lcsP may produce DPD at the C-terminus. Further hydroxylation steps performed alternatively by the cytochrome P450 monooxygenases lcsI, lcsK andr lcsN then yield the non-methylated leucinostatins precursor. It is also possible that leucines can be hydroxylated prior to their incorporation into the peptide. Varying extents of methylation then lead to the formation of leucinostatins A and B. This is Highly reducing polyketide synthase lcsB from Purpureocillium lilacinum (Paecilomyces lilacinus).